We begin with the raw amino-acid sequence, 158 residues long: Transcription elongation factor GreA (158 aa).

The protein belongs to the GreA/GreB family.

In terms of biological role, necessary for efficient RNA polymerase transcription elongation past template-encoded arresting sites. The arresting sites in DNA have the property of trapping a certain fraction of elongating RNA polymerases that pass through, resulting in locked ternary complexes. Cleavage of the nascent transcript by cleavage factors such as GreA or GreB allows the resumption of elongation from the new 3'terminus. GreA releases sequences of 2 to 3 nucleotides. This Zymomonas mobilis subsp. mobilis (strain ATCC 31821 / ZM4 / CP4) protein is Transcription elongation factor GreA.